Consider the following 211-residue polypeptide: Holliday junction branch migration complex subunit RuvA (211 aa).

Residues 1–63 (MIASLRGTVI…EDSQTLYVFK (63 aa)) form a domain I region. A domain II region spans residues 64–142 (DADEKRAFAT…DLGEIADTGA (79 aa)). Residues 143 to 157 (VGAAGAVGDGGDGQA) are flexible linker. Positions 158–211 (VAPDVREQVLEALVGLGFTESKAGTTIEAVLSQWSAPQAPDASGLLRASLAAIK) are domain III.

This sequence belongs to the RuvA family. In terms of assembly, homotetramer. Forms an RuvA(8)-RuvB(12)-Holliday junction (HJ) complex. HJ DNA is sandwiched between 2 RuvA tetramers; dsDNA enters through RuvA and exits via RuvB. An RuvB hexamer assembles on each DNA strand where it exits the tetramer. Each RuvB hexamer is contacted by two RuvA subunits (via domain III) on 2 adjacent RuvB subunits; this complex drives branch migration. In the full resolvosome a probable DNA-RuvA(4)-RuvB(12)-RuvC(2) complex forms which resolves the HJ.

The protein resides in the cytoplasm. Its function is as follows. The RuvA-RuvB-RuvC complex processes Holliday junction (HJ) DNA during genetic recombination and DNA repair, while the RuvA-RuvB complex plays an important role in the rescue of blocked DNA replication forks via replication fork reversal (RFR). RuvA specifically binds to HJ cruciform DNA, conferring on it an open structure. The RuvB hexamer acts as an ATP-dependent pump, pulling dsDNA into and through the RuvAB complex. HJ branch migration allows RuvC to scan DNA until it finds its consensus sequence, where it cleaves and resolves the cruciform DNA. In Corynebacterium jeikeium (strain K411), this protein is Holliday junction branch migration complex subunit RuvA.